Reading from the N-terminus, the 434-residue chain is Asparagine--tRNA ligase (434 aa).

This sequence belongs to the class-II aminoacyl-tRNA synthetase family.

The protein resides in the cytoplasm. The enzyme catalyses tRNA(Asn) + L-asparagine + ATP = L-asparaginyl-tRNA(Asn) + AMP + diphosphate + H(+). The protein is Asparagine--tRNA ligase (asnS) of Pyrococcus furiosus (strain ATCC 43587 / DSM 3638 / JCM 8422 / Vc1).